The chain runs to 526 residues: Glutamyl-tRNA(Gln) amidotransferase subunit A, mitochondrial (526 aa).

The Charge relay system role is filled by Lys76. The disordered stretch occupies residues 147 to 166 (QYREKRKQNSHSENEDSNWL). Residue Ser171 is the Charge relay system of the active site. Catalysis depends on Ser195, which acts as the Acyl-ester intermediate.

This sequence belongs to the amidase family. GatA subfamily. As to quaternary structure, subunit of the heterotrimeric GatCAB amidotransferase (AdT) complex, composed of A (QRSL1), B (GATB) and C (GATC) subunits.

The protein localises to the mitochondrion. It carries out the reaction L-glutamyl-tRNA(Gln) + L-glutamine + ATP + H2O = L-glutaminyl-tRNA(Gln) + L-glutamate + ADP + phosphate + H(+). Functionally, allows the formation of correctly charged Gln-tRNA(Gln) through the transamidation of misacylated Glu-tRNA(Gln) in the mitochondria. The reaction takes place in the presence of glutamine and ATP through an activated gamma-phospho-Glu-tRNA(Gln). This Bos taurus (Bovine) protein is Glutamyl-tRNA(Gln) amidotransferase subunit A, mitochondrial.